Reading from the N-terminus, the 272-residue chain is ATP phosphoribosyltransferase regulatory subunit (272 aa).

The protein belongs to the class-II aminoacyl-tRNA synthetase family. HisZ subfamily. Heteromultimer composed of HisG and HisZ subunits.

It is found in the cytoplasm. Its pathway is amino-acid biosynthesis; L-histidine biosynthesis; L-histidine from 5-phospho-alpha-D-ribose 1-diphosphate: step 1/9. Functionally, required for the first step of histidine biosynthesis. May allow the feedback regulation of ATP phosphoribosyltransferase activity by histidine. In Staphylococcus aureus (strain USA300), this protein is ATP phosphoribosyltransferase regulatory subunit.